A 131-amino-acid chain; its full sequence is Arsenate reductase (131 aa).

Active-site nucleophile residues include C10, C82, and C89. 2 cysteine pairs are disulfide-bonded: C10–C82 and C82–C89.

This sequence belongs to the low molecular weight phosphotyrosine protein phosphatase family. Thioredoxin-coupled ArsC subfamily.

It localises to the cytoplasm. It carries out the reaction arsenate + [thioredoxin]-dithiol + H(+) = arsenite + [thioredoxin]-disulfide + H2O. Catalyzes the reduction of arsenate [As(V)] to arsenite [As(III)]. The protein is Arsenate reductase of Staphylococcus aureus (strain N315).